Consider the following 708-residue polypeptide: Polyribonucleotide nucleotidyltransferase (708 aa).

2 residues coordinate Mg(2+): Asp488 and Asp494. Residues 555–615 (PIIKVTKVDP…ENVDKAIELI (61 aa)) form the KH domain. One can recognise an S1 motif domain in the interval 625 to 692 (GEVLEGKVTR…DLGRLQFKRV (68 aa)).

It belongs to the polyribonucleotide nucleotidyltransferase family. It depends on Mg(2+) as a cofactor.

It localises to the cytoplasm. It carries out the reaction RNA(n+1) + phosphate = RNA(n) + a ribonucleoside 5'-diphosphate. Involved in mRNA degradation. Catalyzes the phosphorolysis of single-stranded polyribonucleotides processively in the 3'- to 5'-direction. This Thermotoga sp. (strain RQ2) protein is Polyribonucleotide nucleotidyltransferase.